We begin with the raw amino-acid sequence, 892 residues long: Alanine--tRNA ligase (892 aa).

Zn(2+) contacts are provided by H594, H598, C702, and H706.

This sequence belongs to the class-II aminoacyl-tRNA synthetase family. Zn(2+) is required as a cofactor.

Its subcellular location is the cytoplasm. It carries out the reaction tRNA(Ala) + L-alanine + ATP = L-alanyl-tRNA(Ala) + AMP + diphosphate. Functionally, catalyzes the attachment of alanine to tRNA(Ala) in a two-step reaction: alanine is first activated by ATP to form Ala-AMP and then transferred to the acceptor end of tRNA(Ala). Also edits incorrectly charged Ser-tRNA(Ala) and Gly-tRNA(Ala) via its editing domain. The polypeptide is Alanine--tRNA ligase (Pyrobaculum aerophilum (strain ATCC 51768 / DSM 7523 / JCM 9630 / CIP 104966 / NBRC 100827 / IM2)).